Here is a 504-residue protein sequence, read N- to C-terminus: ATP synthase subunit alpha (504 aa).

169–176 (GDRKTGKT) serves as a coordination point for ATP.

It belongs to the ATPase alpha/beta chains family. As to quaternary structure, F-type ATPases have 2 components, CF(1) - the catalytic core - and CF(0) - the membrane proton channel. CF(1) has five subunits: alpha(3), beta(3), gamma(1), delta(1), epsilon(1). CF(0) has three main subunits: a(1), b(2) and c(9-12). The alpha and beta chains form an alternating ring which encloses part of the gamma chain. CF(1) is attached to CF(0) by a central stalk formed by the gamma and epsilon chains, while a peripheral stalk is formed by the delta and b chains.

It is found in the cell membrane. It carries out the reaction ATP + H2O + 4 H(+)(in) = ADP + phosphate + 5 H(+)(out). Functionally, produces ATP from ADP in the presence of a proton gradient across the membrane. The alpha chain is a regulatory subunit. In Leuconostoc citreum (strain KM20), this protein is ATP synthase subunit alpha.